A 316-amino-acid chain; its full sequence is Zinc finger protein 367 (316 aa).

The disordered stretch occupies residues Val-61–Ile-97. The segment covering Gly-70 to Ala-82 has biased composition (low complexity). 2 consecutive C2H2-type zinc fingers follow at residues Ile-121–His-143 and Tyr-149–His-173. The tract at residues Gln-234–Leu-294 is disordered. Acidic residues predominate over residues Glu-255–Glu-278. A coiled-coil region spans residues Thr-289 to Asn-313.

Belongs to the krueppel C2H2-type zinc-finger protein family.

It is found in the nucleus. Its function is as follows. Transcriptional activator. In Danio rerio (Zebrafish), this protein is Zinc finger protein 367 (znf367).